A 218-amino-acid chain; its full sequence is Small ribosomal subunit protein uS5 (218 aa).

The 64-residue stretch at 55 to 118 (LDHEVIDVSI…RNAKLNIIPV (64 aa)) folds into the S5 DRBM domain.

It belongs to the universal ribosomal protein uS5 family. Part of the 30S ribosomal subunit. Contacts protein S4.

In terms of biological role, with S4 and S12 plays an important role in translational accuracy. This Aeropyrum pernix (strain ATCC 700893 / DSM 11879 / JCM 9820 / NBRC 100138 / K1) protein is Small ribosomal subunit protein uS5.